A 304-amino-acid chain; its full sequence is Xylanase inhibitor protein 1 (304 aa).

The first 30 residues, 1 to 30, serve as a signal peptide directing secretion; the sequence is MAPLAARRPACLLALLSVAAALFLTPTALA. A GH18 domain is found at 36-304; sequence GQVTVFWGRN…NYSSLIKYYA (269 aa). Cys55 and Cys96 form a disulfide bridge. Asn119 carries an N-linked (GlcNAc...) asparagine glycan. Residue Glu158 is the Proton donor of the active site. The tract at residues 178–184 is interaction with fungal GH11 xylanase; sequence IRGGPGK. Cys194 and Cys225 are oxidised to a cystine. The segment at 262–275 is interaction with fungal GH10 xylanase; sequence HPKNVYYGVAPVAQ. Residue Asn295 is glycosylated (N-linked (GlcNAc...) asparagine).

The protein belongs to the glycosyl hydrolase 18 family. Xylanase inhibitor subfamily. Binds to fungal GH10 and GH11 xylanases. Also forms a ternary complex with barley alpha-amylase 1 (AMY1) and insoluble starch.

It is found in the secreted. Fungal xylanase inhibitor. Possesses competitive inhibiting activity against fungal endo-1,4-beta-D-xylanases belonging to glycoside hydrolase family 10 (GH10) and family 11 (GH11). Possesses also inhibitory activity towards barley alpha-amylases. Binding to xylanases or amylases is necessary for inhibition activity. May function in plant defense against secreted fungal pathogen xylanases. Is similar to class III chitinases, but does not exhibit chitinase activity. This is Xylanase inhibitor protein 1 from Triticum aestivum (Wheat).